The following is a 119-amino-acid chain: NADH-quinone oxidoreductase subunit 7 (119 aa).

Helical transmembrane passes span 11-31, 59-79, and 88-108; these read LIYV…GALL, VHFY…AFLW, and LGLY…VGFL.

This sequence belongs to the complex I subunit 3 family. In terms of assembly, NDH-1 is composed of 15 different subunits, Nqo1 to Nqo15. The complex has a L-shaped structure, with the hydrophobic arm (subunits Nqo7, Nqo8 and Nqo10 to Nqo14) embedded in the membrane and the hydrophilic peripheral arm (subunits Nqo1 to Nqo6, Nqo9 and Nqo15) protruding into the bacterial cytoplasm. The hydrophilic domain contains all the redox centers.

It is found in the cell inner membrane. The enzyme catalyses a quinone + NADH + 5 H(+)(in) = a quinol + NAD(+) + 4 H(+)(out). NDH-1 shuttles electrons from NADH, via FMN and iron-sulfur (Fe-S) centers, to quinones in the respiratory chain. The immediate electron acceptor for the enzyme in this species is menaquinone. Couples the redox reaction to proton translocation (for every two electrons transferred, four hydrogen ions are translocated across the cytoplasmic membrane), and thus conserves the redox energy in a proton gradient required for the synthesis of ATP. The sequence is that of NADH-quinone oxidoreductase subunit 7 (nqo7) from Thermus thermophilus (strain ATCC 27634 / DSM 579 / HB8).